The sequence spans 247 residues: Cell division protein ZapD (247 aa).

This sequence belongs to the ZapD family. Interacts with FtsZ.

It localises to the cytoplasm. Its function is as follows. Cell division factor that enhances FtsZ-ring assembly. Directly interacts with FtsZ and promotes bundling of FtsZ protofilaments, with a reduction in FtsZ GTPase activity. The chain is Cell division protein ZapD from Salmonella choleraesuis (strain SC-B67).